Here is a 124-residue protein sequence, read N- to C-terminus: Quinol oxidase subunit 4 (124 aa).

A run of 3 helical transmembrane segments spans residues 16 to 36 (IVGFILSIVLTLLALWVAVYT), 44 to 64 (LWIIFGFAFIQAALQLLMFMH), and 78 to 98 (TLFGFFGAIVIVLGSIWIFAA).

Belongs to the cytochrome c oxidase bacterial subunit 4 family.

It localises to the cell membrane. The catalysed reaction is 2 a quinol + O2 = 2 a quinone + 2 H2O. Functionally, catalyzes quinol oxidation with the concomitant reduction of oxygen to water. Major component for energy conversion during vegetative growth. This chain is Quinol oxidase subunit 4 (qoxD), found in Bacillus subtilis (strain 168).